The primary structure comprises 603 residues: Outer envelope protein 64, mitochondrial (603 aa).

Serine 2 is subject to N-acetylserine. A helical transmembrane segment spans residues 16–32 (KVWVVIGVTVAGIVILA). TPR repeat units follow at residues 488 to 521 (SEVMKEKGNAAYKGKQWNKAVNFYTEAIKLNGAN), 523 to 555 (TYYCNRAAAFLELCCFQQAEQDCTKAMLIDKKN), and 556 to 589 (VKAYLRRGTARESLVRYKEAAADFRHALVLEPQN).

As to expression, expressed in roots and flower buds. Detected in leaves.

The protein localises to the mitochondrion outer membrane. Its function is as follows. Chaperone receptor mediating Hsp90-dependent protein targeting to mitochondria. The polypeptide is Outer envelope protein 64, mitochondrial (OM64) (Arabidopsis thaliana (Mouse-ear cress)).